The primary structure comprises 207 residues: Fibroblast growth factor 18 (207 aa).

The first 27 residues, 1 to 27, serve as a signal peptide directing secretion; that stretch reads MYSAPSACTCLCLHFLLLCFQVQVLAA. Residue Asn-39 is glycosylated (N-linked (GlcNAc...) asparagine). A disulfide bridge links Cys-109 with Cys-127. A glycan (N-linked (GlcNAc...) asparagine) is linked at Asn-137.

This sequence belongs to the heparin-binding growth factors family. Interacts with FGFR3 and FGFR4.

The protein resides in the secreted. Plays an important role in the regulation of cell proliferation, cell differentiation and cell migration. Required for normal ossification and bone development. Stimulates hepatic and intestinal proliferation. This is Fibroblast growth factor 18 (Fgf18) from Mus musculus (Mouse).